We begin with the raw amino-acid sequence, 163 residues long: MKSTFLVVLELAFFLLPGRVLYAQKDSEDGGSHYSSDDCQVTPVIHVLQYPGCVPKPIPSFACIGRCASYIQVSGSKIWQMERSCMCCQESGEREASVSLFCPKAKNGEKKFRKVSTKAPLECMCRPCTGIEDANVIPQELTSFADEGTLTGYFQKSHYKSIE.

The signal sequence occupies residues 1-23; sequence MKSTFLVVLELAFFLLPGRVLYA. Disulfide bonds link Cys39/Cys88, Cys53/Cys102, Cys63/Cys123, Cys67/Cys125, and Cys85/Cys128. The 91-residue stretch at 39–129 folds into the CTCK domain; that stretch reads CQVTPVIHVL…PLECMCRPCT (91 aa).

In terms of assembly, heterodimer of burs and pburs.

It localises to the secreted. Functionally, final heterodimeric neurohormone released at the end of the molting cycle, involved in the sclerotization (tanning) of the insect cuticle, melanization and wing spreading. This is Bursicon (burs124) from Anopheles gambiae (African malaria mosquito).